A 289-amino-acid chain; its full sequence is Splicing factor C9orf78 homolog (289 aa).

Disordered regions lie at residues 1–30 (MRITGKTFRRRRADSESEEDEQESEEVRLK) and 85–111 (RGKDKVSEEEDLHLGTSFSAETNRRDE). The interaction with SNRNP200 stretch occupies residues 5-58 (GKTFRRRRADSESEEDEQESEEVRLKLEETREVQNLRKRPNGVSAAALLVGEKV). Phosphoserine is present on residues Ser15 and Ser17. Tyr147 bears the Phosphotyrosine mark. Residues 232 to 283 (LNAPIRRNKEEPKARPLRVGDTEKPEPERSPPNRKRPANEKATDDYHYEKFK) are compositionally biased toward basic and acidic residues. The interval 232 to 289 (LNAPIRRNKEEPKARPLRVGDTEKPEPERSPPNRKRPANEKATDDYHYEKFKKMNRRY) is disordered. At Thr253 the chain carries Phosphothreonine. Ser261 bears the Phosphoserine mark.

This sequence belongs to the TLS1 family. Component of the spliceosome. Interacts with SNRNP200; the interaction is direct. Interacts with PRPF8.

It is found in the nucleus. The protein resides in the chromosome. It localises to the centromere. Plays a role in pre-mRNA splicing by promoting usage of the upstream 3'-splice site at alternative NAGNAG splice sites; these are sites featuring alternative acceptor motifs separated by only a few nucleotides. May also modulate exon inclusion events. PPlays a role in spliceosomal remodeling by displacing WBP4 from SNRNP200 and may act to inhibit SNRNP200 helicase activity. Binds U5 snRNA. Required for proper chromosome segregation. Not required for splicing of shelterin components. This is Splicing factor C9orf78 homolog from Mus musculus (Mouse).